The primary structure comprises 285 residues: Bifunctional protein FolD (285 aa).

Residues 165–167, serine 190, and isoleucine 231 each bind NADP(+); that span reads GRS.

Belongs to the tetrahydrofolate dehydrogenase/cyclohydrolase family. In terms of assembly, homodimer.

It catalyses the reaction (6R)-5,10-methylene-5,6,7,8-tetrahydrofolate + NADP(+) = (6R)-5,10-methenyltetrahydrofolate + NADPH. It carries out the reaction (6R)-5,10-methenyltetrahydrofolate + H2O = (6R)-10-formyltetrahydrofolate + H(+). The protein operates within one-carbon metabolism; tetrahydrofolate interconversion. In terms of biological role, catalyzes the oxidation of 5,10-methylenetetrahydrofolate to 5,10-methenyltetrahydrofolate and then the hydrolysis of 5,10-methenyltetrahydrofolate to 10-formyltetrahydrofolate. The polypeptide is Bifunctional protein FolD (Alkaliphilus oremlandii (strain OhILAs) (Clostridium oremlandii (strain OhILAs))).